The sequence spans 217 residues: Uracil-DNA glycosylase (217 aa).

The active-site Proton acceptor is the D62.

Belongs to the uracil-DNA glycosylase (UDG) superfamily. UNG family.

Its subcellular location is the cytoplasm. The enzyme catalyses Hydrolyzes single-stranded DNA or mismatched double-stranded DNA and polynucleotides, releasing free uracil.. In terms of biological role, excises uracil residues from the DNA which can arise as a result of misincorporation of dUMP residues by DNA polymerase or due to deamination of cytosine. In Streptococcus pyogenes serotype M28 (strain MGAS6180), this protein is Uracil-DNA glycosylase.